Consider the following 723-residue polypeptide: Aminodeoxychorismate synthase (723 aa).

The region spanning 2–195 is the Glutamine amidotransferase type-1 domain; the sequence is RTLLVDNYDS…RDLTERHGRT (194 aa). The active-site Nucleophile is C82. The tract at residues 96–117 is disordered; sequence VGRAPEPRHGRTSAVRHDGTGL. Basic and acidic residues predominate over residues 98 to 114; sequence RAPEPRHGRTSAVRHDG. Catalysis depends on residues H169 and E171. Disordered stretches follow at residues 192–219 and 693–723; these read HGRT…KATT and FPGR…VLPG. Residues 255-723 form a PABB component region; sequence LDSSRPGGEL…GAPKDLVLPG (469 aa). Residues 695–704 are compositionally biased toward basic and acidic residues; the sequence is GRERPGKDLD.

This sequence in the C-terminal section; belongs to the anthranilate synthase component I family.

It catalyses the reaction chorismate + L-glutamine = 4-amino-4-deoxychorismate + L-glutamate. It functions in the pathway antibiotic biosynthesis; candicidin biosynthesis. In terms of biological role, involved in candicidin biosynthesis. Catalyzes the biosynthesis of 4-amino-4-deoxychorismate (ADC) from chorismate and glutamine. The polypeptide is Aminodeoxychorismate synthase (Streptomyces griseus).